The sequence spans 366 residues: ERCC4 domain-containing protein EP364R (366 aa).

The 99-residue stretch at 3-101 (FLVADHREHH…QLYFFVEGPA (99 aa)) folds into the ERCC4 domain. Composition is skewed to polar residues over residues 320 to 331 (RPTMQVATQPAA) and 349 to 366 (PTGHQTLSKEMSLNTVRC). The interval 320–366 (RPTMQVATQPAATQPLHKVSDDASSDASSPTGHQTLSKEMSLNTVRC) is disordered.

This sequence belongs to the asfivirus EP364R family.

Its function is as follows. Plays a role in the inhibition of type I interferon signaling pathway. Mechanistically, specifically interacts with 2',3'-cGAMP and cleaves it via its phosphodiesterase activity. In turn, prevents 2',3'-cGAMP interaction with host ER-resident STING1 leading to inhibition of downstream signaling pathway and type I interferon production. This is ERCC4 domain-containing protein EP364R from Ornithodoros (relapsing fever ticks).